Reading from the N-terminus, the 124-residue chain is Ribonuclease pancreatic (124 aa).

Residues 1–13 (SETAAEKFERQHM) show a composition bias toward basic and acidic residues. The segment at 1–23 (SETAAEKFERQHMDSYSSSSSNS) is disordered. Residues lysine 7 and arginine 10 each contribute to the substrate site. The Proton acceptor role is filled by histidine 12. Cystine bridges form between cysteine 26–cysteine 84, cysteine 40–cysteine 95, cysteine 58–cysteine 110, and cysteine 65–cysteine 72. Substrate is bound by residues 41–45 (KPVNT), lysine 66, and arginine 85. The Proton donor role is filled by histidine 119.

It belongs to the pancreatic ribonuclease family. Monomer. Interacts with and forms tight 1:1 complexes with RNH1. Dimerization of two such complexes may occur. Interaction with RNH1 inhibits this protein. Pancreas.

It is found in the secreted. The enzyme catalyses an [RNA] containing cytidine + H2O = an [RNA]-3'-cytidine-3'-phosphate + a 5'-hydroxy-ribonucleotide-3'-[RNA].. The catalysed reaction is an [RNA] containing uridine + H2O = an [RNA]-3'-uridine-3'-phosphate + a 5'-hydroxy-ribonucleotide-3'-[RNA].. Functionally, endonuclease that catalyzes the cleavage of RNA on the 3' side of pyrimidine nucleotides. Acts on single-stranded and double-stranded RNA. The polypeptide is Ribonuclease pancreatic (RNASE1) (Camelus bactrianus (Bactrian camel)).